The following is a 145-amino-acid chain: Hemoglobin fetal subunit beta (145 aa).

Residues 1–145 form the Globin domain; sequence MLTAEEKASV…VANALAHRYH (145 aa). Residues His-62 and His-91 each coordinate heme b.

It belongs to the globin family. As to quaternary structure, heterotetramer of two alpha chains and two beta chains.

The protein is Hemoglobin fetal subunit beta of Ovis aries (Sheep).